The chain runs to 559 residues: Chaperonin GroEL 3 (559 aa).

ATP contacts are provided by residues 88-92 (DGTTT), Gly426, and Asp507.

Belongs to the chaperonin (HSP60) family. In terms of assembly, forms a cylinder of 14 subunits composed of two heptameric rings stacked back-to-back. Interacts with the co-chaperonin GroES.

The protein localises to the cytoplasm. It carries out the reaction ATP + H2O + a folded polypeptide = ADP + phosphate + an unfolded polypeptide.. Its function is as follows. Together with its co-chaperonin GroES, plays an essential role in assisting protein folding. The GroEL-GroES system forms a nano-cage that allows encapsulation of the non-native substrate proteins and provides a physical environment optimized to promote and accelerate protein folding. The sequence is that of Chaperonin GroEL 3 from Methylococcus capsulatus (strain ATCC 33009 / NCIMB 11132 / Bath).